We begin with the raw amino-acid sequence, 414 residues long: Putative dipeptidase ARB_02715 (414 aa).

The first 20 residues, 1 to 20, serve as a signal peptide directing secretion; the sequence is MAALFVSLLALTSLVPVQGA. Zn(2+)-binding residues include His-45, Asp-47, and Glu-157. Cys-96 and Cys-186 are oxidised to a cystine. His-184 is a substrate binding site. Zn(2+)-binding residues include His-228 and His-249. The substrate site is built by Arg-260 and Asp-320. Residue Asn-392 is glycosylated (N-linked (GlcNAc...) asparagine).

The protein belongs to the metallo-dependent hydrolases superfamily. Peptidase M19 family. Zn(2+) serves as cofactor.

The enzyme catalyses an L-aminoacyl-L-amino acid + H2O = 2 an L-alpha-amino acid. Functionally, hydrolyzes a wide range of dipeptides. This chain is Putative dipeptidase ARB_02715, found in Arthroderma benhamiae (strain ATCC MYA-4681 / CBS 112371) (Trichophyton mentagrophytes).